A 667-amino-acid polypeptide reads, in one-letter code: Probable potassium transport system protein Kup (667 aa).

12 consecutive transmembrane segments (helical) span residues 16-36, 58-78, 101-121, 146-166, 167-187, 221-241, 253-273, 294-314, 343-363, 373-393, 399-419, and 424-444; these read GFII…LYTM, VSLI…LIAL, WLII…ALTP, TNVI…QRFG, TGVI…VLGI, IFIL…YSDL, WPFV…WILA, VYLV…LISG, LYIP…VLYF, YGLA…YYLI, PLLA…FFLA, and FMHG…VMVI.

It belongs to the HAK/KUP transporter (TC 2.A.72) family.

It localises to the cell membrane. It catalyses the reaction K(+)(in) + H(+)(in) = K(+)(out) + H(+)(out). In terms of biological role, transport of potassium into the cell. Likely operates as a K(+):H(+) symporter. The protein is Probable potassium transport system protein Kup of Streptococcus equi subsp. equi (strain 4047).